The sequence spans 216 residues: Imidazole glycerol phosphate synthase subunit HisH (216 aa).

Residues 2 to 216 (SVAIVDYGSG…LISNFLKWKP (215 aa)) enclose the Glutamine amidotransferase type-1 domain. Cys-88 acts as the Nucleophile in catalysis. Catalysis depends on residues His-196 and Glu-198.

As to quaternary structure, heterodimer of HisH and HisF.

It localises to the cytoplasm. It catalyses the reaction 5-[(5-phospho-1-deoxy-D-ribulos-1-ylimino)methylamino]-1-(5-phospho-beta-D-ribosyl)imidazole-4-carboxamide + L-glutamine = D-erythro-1-(imidazol-4-yl)glycerol 3-phosphate + 5-amino-1-(5-phospho-beta-D-ribosyl)imidazole-4-carboxamide + L-glutamate + H(+). The enzyme catalyses L-glutamine + H2O = L-glutamate + NH4(+). Its pathway is amino-acid biosynthesis; L-histidine biosynthesis; L-histidine from 5-phospho-alpha-D-ribose 1-diphosphate: step 5/9. Functionally, IGPS catalyzes the conversion of PRFAR and glutamine to IGP, AICAR and glutamate. The HisH subunit catalyzes the hydrolysis of glutamine to glutamate and ammonia as part of the synthesis of IGP and AICAR. The resulting ammonia molecule is channeled to the active site of HisF. This is Imidazole glycerol phosphate synthase subunit HisH from Rhodopseudomonas palustris (strain ATCC BAA-98 / CGA009).